Reading from the N-terminus, the 234-residue chain is Cell polarity protein alp11 (234 aa).

In terms of domain architecture, Ubiquitin-like spans 4–88 (ITLFIKSSSA…IVVEDTRPPH (85 aa)). Residues 174–216 (VPEINNDNLWVGVEFDEPVGKNDGTVSGKRYFNAKNKHGSFLR) form the CAP-Gly domain. S213 carries the post-translational modification Phosphoserine.

It belongs to the TBCB family. As to quaternary structure, binds to monomeric alpha-tubulin. Interacts with alp21.

Its subcellular location is the cytoplasm. It localises to the cytoskeleton. Required for microtubule function and cell polarity. Involved in the proper folding of alpha-tubulin. In Schizosaccharomyces pombe (strain 972 / ATCC 24843) (Fission yeast), this protein is Cell polarity protein alp11 (alp11).